Consider the following 322-residue polypeptide: 4-diphosphocytidyl-2-C-methyl-D-erythritol kinase (322 aa).

Lys-25 is a catalytic residue. 110-120 (PVAGGMAGGSA) lines the ATP pocket. The active site involves Asp-152.

Belongs to the GHMP kinase family. IspE subfamily.

The enzyme catalyses 4-CDP-2-C-methyl-D-erythritol + ATP = 4-CDP-2-C-methyl-D-erythritol 2-phosphate + ADP + H(+). The protein operates within isoprenoid biosynthesis; isopentenyl diphosphate biosynthesis via DXP pathway; isopentenyl diphosphate from 1-deoxy-D-xylulose 5-phosphate: step 3/6. In terms of biological role, catalyzes the phosphorylation of the position 2 hydroxy group of 4-diphosphocytidyl-2C-methyl-D-erythritol. The polypeptide is 4-diphosphocytidyl-2-C-methyl-D-erythritol kinase (Mycolicibacterium gilvum (strain PYR-GCK) (Mycobacterium gilvum (strain PYR-GCK))).